A 164-amino-acid polypeptide reads, in one-letter code: Ubiquitin-fold modifier-conjugating enzyme 1 (164 aa).

C116 (glycyl thioester intermediate) is an active-site residue.

It belongs to the ubiquitin-conjugating enzyme family. UFC1 subfamily.

Its function is as follows. E2-like enzyme which forms an intermediate with UFM1 via a thioester linkage. The protein is Ubiquitin-fold modifier-conjugating enzyme 1 of Drosophila persimilis (Fruit fly).